A 397-amino-acid chain; its full sequence is G2/mitotic-specific cyclin-B2 (397 aa).

2 disordered regions span residues 1–20 (MALL…DTGV) and 64–97 (KVTH…PEDV). Phosphothreonine is present on T8. S11 is modified (phosphoserine). The segment covering 64 to 74 (KVTHVNKQPKP) has biased composition (polar residues). 3 positions are modified to phosphoserine: S77, S98, and S391.

It belongs to the cyclin family. Cyclin AB subfamily. In terms of assembly, interacts with the CDK1 protein kinase to form a serine/threonine kinase holoenzyme complex also known as maturation promoting factor (MPF). The cyclin subunit imparts substrate specificity to the complex.

Its function is as follows. Essential for the control of the cell cycle at the G2/M (mitosis) transition. The chain is G2/mitotic-specific cyclin-B2 (CCNB2) from Mesocricetus auratus (Golden hamster).